A 252-amino-acid polypeptide reads, in one-letter code: Imidazole glycerol phosphate synthase subunit HisF (252 aa).

Residues aspartate 11 and aspartate 130 contribute to the active site.

This sequence belongs to the HisA/HisF family. As to quaternary structure, heterodimer of HisH and HisF.

It localises to the cytoplasm. It catalyses the reaction 5-[(5-phospho-1-deoxy-D-ribulos-1-ylimino)methylamino]-1-(5-phospho-beta-D-ribosyl)imidazole-4-carboxamide + L-glutamine = D-erythro-1-(imidazol-4-yl)glycerol 3-phosphate + 5-amino-1-(5-phospho-beta-D-ribosyl)imidazole-4-carboxamide + L-glutamate + H(+). Its pathway is amino-acid biosynthesis; L-histidine biosynthesis; L-histidine from 5-phospho-alpha-D-ribose 1-diphosphate: step 5/9. Functionally, IGPS catalyzes the conversion of PRFAR and glutamine to IGP, AICAR and glutamate. The HisF subunit catalyzes the cyclization activity that produces IGP and AICAR from PRFAR using the ammonia provided by the HisH subunit. The sequence is that of Imidazole glycerol phosphate synthase subunit HisF from Hyphomonas neptunium (strain ATCC 15444).